Consider the following 301-residue polypeptide: Enolase-phosphatase E1 (301 aa).

Positions 22 and 24 each coordinate Mg(2+). Substrate contacts are provided by residues 163–164 (SS) and lysine 197. Aspartate 222 is a binding site for Mg(2+). A disordered region spans residues 273-301 (AQAGDTEAKRSASGDGALAAKKAPPTHDF).

The protein belongs to the HAD-like hydrolase superfamily. MasA/MtnC family. Monomer. The cofactor is Mg(2+).

It is found in the cytoplasm. Its subcellular location is the nucleus. It carries out the reaction 5-methylsulfanyl-2,3-dioxopentyl phosphate + H2O = 1,2-dihydroxy-5-(methylsulfanyl)pent-1-en-3-one + phosphate. It functions in the pathway amino-acid biosynthesis; L-methionine biosynthesis via salvage pathway; L-methionine from S-methyl-5-thio-alpha-D-ribose 1-phosphate: step 3/6. It participates in amino-acid biosynthesis; L-methionine biosynthesis via salvage pathway; L-methionine from S-methyl-5-thio-alpha-D-ribose 1-phosphate: step 4/6. Its function is as follows. Bifunctional enzyme that catalyzes the enolization of 2,3-diketo-5-methylthiopentyl-1-phosphate (DK-MTP-1-P) into the intermediate 2-hydroxy-3-keto-5-methylthiopentenyl-1-phosphate (HK-MTPenyl-1-P), which is then dephosphorylated to form the acireductone 1,2-dihydroxy-3-keto-5-methylthiopentene (DHK-MTPene). This Monosiga brevicollis (Choanoflagellate) protein is Enolase-phosphatase E1.